Reading from the N-terminus, the 367-residue chain is Farnesyl pyrophosphate synthase (367 aa).

Residues Lys71, Arg74, and Gln110 each coordinate isopentenyl diphosphate. Mg(2+)-binding residues include Asp117 and Asp121. Arg126 serves as a coordination point for dimethylallyl diphosphate. Arg127 is a binding site for isopentenyl diphosphate. Dimethylallyl diphosphate is bound by residues Lys214, Thr215, Gln254, Lys271, and Lys280.

The protein belongs to the FPP/GGPP synthase family. In terms of assembly, homodimer. Mg(2+) serves as cofactor.

Its subcellular location is the cytoplasm. The enzyme catalyses isopentenyl diphosphate + dimethylallyl diphosphate = (2E)-geranyl diphosphate + diphosphate. It catalyses the reaction isopentenyl diphosphate + (2E)-geranyl diphosphate = (2E,6E)-farnesyl diphosphate + diphosphate. It participates in isoprenoid biosynthesis; farnesyl diphosphate biosynthesis; farnesyl diphosphate from geranyl diphosphate and isopentenyl diphosphate: step 1/1. The protein operates within isoprenoid biosynthesis; geranyl diphosphate biosynthesis; geranyl diphosphate from dimethylallyl diphosphate and isopentenyl diphosphate: step 1/1. Catalyzes the sequential condensation of isopentenyl pyrophosphate with the allylic pyrophosphates, dimethylallyl pyrophosphate, and then with the resultant geranylpyrophosphate to the ultimate product farnesyl pyrophosphate. This Gallus gallus (Chicken) protein is Farnesyl pyrophosphate synthase (FDPS).